A 140-amino-acid chain; its full sequence is Mite allergen Der p 21.0101 (140 aa).

The signal sequence occupies residues 1–19; the sequence is MKFIITLFAAIVMAAAVSG. Immunodominant conformational IgE-binding epitope regions lie at residues 20-53 and 108-140; these read FIVG…EKGL and YNYE…DEYY.

Belongs to the mite group 5 allergen family. As to quaternary structure, monomer. Homodimer. As to expression, expressed in the epithelium, lumen and microvilli of the midgut, and in feces.

The protein resides in the cytoplasm. Its subcellular location is the endoplasmic reticulum. The protein localises to the vesicle. It is found in the secreted. In Dermatophagoides pteronyssinus (European house dust mite), this protein is Mite allergen Der p 21.0101.